Consider the following 221-residue polypeptide: MAGNPANTESHDDDALHRRGLMFILSSPSGAGKTTIARKLLSEDSEIAMSVSVTTRPMRPGEVDGKDYFFVEPAEFERMVEANEFYEWATVFGNCYGTPKAHIRERLKTGGDVLFDIDWQGTQQLYQKAQADVVRVFILPPSLDELRRRLTGRGTDSAEVIAARMDRAQAEISHWDGYDYVVVNDDVDGCFGKVREILAAERMRRTRQTGLIDFVRGLMRG.

Positions 20-199 (GLMFILSSPS…CFGKVREILA (180 aa)) constitute a Guanylate kinase-like domain. ATP is bound at residue 27 to 34 (SPSGAGKT).

It belongs to the guanylate kinase family.

Its subcellular location is the cytoplasm. The catalysed reaction is GMP + ATP = GDP + ADP. Functionally, essential for recycling GMP and indirectly, cGMP. The polypeptide is Guanylate kinase (Novosphingobium aromaticivorans (strain ATCC 700278 / DSM 12444 / CCUG 56034 / CIP 105152 / NBRC 16084 / F199)).